Here is a 296-residue protein sequence, read N- to C-terminus: GTPase Era (296 aa).

The Era-type G domain maps to 3 to 170 (KSGFVTIVGR…KELMFKYIPE (168 aa)). Positions 11-18 (GRPNVGKS) are G1. 11–18 (GRPNVGKS) lines the GTP pocket. The G2 stretch occupies residues 37–41 (QTTRN). Residues 58-61 (DTPG) are G3. GTP-binding positions include 58–62 (DTPGI) and 120–123 (NKID). Positions 120–123 (NKID) are G4. The tract at residues 149-151 (ISA) is G5. A KH type-2 domain is found at 201–278 (LSEEVPHGIA…YIRLWVKVKE (78 aa)).

Belongs to the TRAFAC class TrmE-Era-EngA-EngB-Septin-like GTPase superfamily. Era GTPase family. As to quaternary structure, monomer.

Its subcellular location is the cytoplasm. The protein localises to the cell membrane. An essential GTPase that binds both GDP and GTP, with rapid nucleotide exchange. Plays a role in 16S rRNA processing and 30S ribosomal subunit biogenesis and possibly also in cell cycle regulation and energy metabolism. The protein is GTPase Era of Clostridium botulinum (strain ATCC 19397 / Type A).